A 260-amino-acid polypeptide reads, in one-letter code: Tropinone reductase homolog At1g07450 (260 aa).

Residue 14–38 (LVTGGSKGIGYAIVEELVGFGARVH) coordinates NADP(+). Residue S147 participates in substrate binding. Y159 (proton acceptor) is an active-site residue.

It belongs to the short-chain dehydrogenases/reductases (SDR) family. SDR65C subfamily.

The chain is Tropinone reductase homolog At1g07450 from Arabidopsis thaliana (Mouse-ear cress).